The following is a 177-amino-acid chain: Anti-apoptotic protein NR13 (177 aa).

Residues 75-94 carry the BH1 motif; the sequence is LETDGGLNWGRLLALVVFAG. Residues 86 to 106 form a helical membrane-spanning segment; sequence LLALVVFAGTLAAALAESACE. The short motif at 126–141 is the BH2 element; sequence EWMEEHGGWDGFCRFF. A helical membrane pass occupies residues 156 to 176; that stretch reads SNAIMAAAGFGIAGLAFLLVV.

It belongs to the Bcl-2 family. In terms of assembly, interacts with BAX. As to expression, mainly expressed in neural and muscular tissues.

Its subcellular location is the cell membrane. In terms of biological role, shows anti-apoptotic properties. Counteract the pro-apoptotic activity of BAX. This Coturnix japonica (Japanese quail) protein is Anti-apoptotic protein NR13 (NR13).